Here is a 620-residue protein sequence, read N- to C-terminus: Chaperone protein HscA homolog (620 aa).

It belongs to the heat shock protein 70 family.

Functionally, chaperone involved in the maturation of iron-sulfur cluster-containing proteins. Has a low intrinsic ATPase activity which is markedly stimulated by HscB. This Janthinobacterium sp. (strain Marseille) (Minibacterium massiliensis) protein is Chaperone protein HscA homolog.